A 253-amino-acid chain; its full sequence is Chitooligosaccharide deacetylase (253 aa).

Positions 61 and 126 each coordinate Mg(2+).

It belongs to the YdjC deacetylase family. ChbG subfamily. In terms of assembly, homodimer. The cofactor is Mg(2+).

The protein resides in the cytoplasm. The enzyme catalyses N,N'-diacetylchitobiose + H2O = N-acetyl-beta-D-glucosaminyl-(1-&gt;4)-D-glucosamine + acetate. It catalyses the reaction diacetylchitobiose-6'-phosphate + H2O = N'-monoacetylchitobiose-6'-phosphate + acetate. It participates in glycan degradation; chitin degradation. Its function is as follows. Involved in the degradation of chitin. ChbG is essential for growth on the acetylated chitooligosaccharides chitobiose and chitotriose but is dispensable for growth on cellobiose and chitosan dimer, the deacetylated form of chitobiose. Deacetylation of chitobiose-6-P and chitotriose-6-P is necessary for both the activation of the chb promoter by the regulatory protein ChbR and the hydrolysis of phosphorylated beta-glucosides by the phospho-beta-glucosidase ChbF. Catalyzes the removal of only one acetyl group from chitobiose-6-P to yield monoacetylchitobiose-6-P, the inducer of ChbR and the substrate of ChbF. The sequence is that of Chitooligosaccharide deacetylase from Yersinia enterocolitica serotype O:8 / biotype 1B (strain NCTC 13174 / 8081).